Reading from the N-terminus, the 586-residue chain is SPbeta prophage-derived uncharacterized protein YorA (586 aa).

PbH1 repeat units lie at residues 108-147 (AENV…HVHG), 148-170 (SKNV…WIAA), 184-206 (SKSV…ATNG), 207-235 (CEGL…DLEG), 246-268 (PYEL…TAHT), 288-313 (STDV…DSVG), 320-341 (GNRI…MIRG), 364-384 (AEDV…QIQV), 387-410 (SSDI…KVMD), 411-432 (SNDV…YCER), 435-456 (AVRI…YWDK), 481-504 (MYNI…HLIG), and 505-531 (GSEH…YLNG).

This is SPbeta prophage-derived uncharacterized protein YorA (yorA) from Bacillus subtilis (strain 168).